The primary structure comprises 97 residues: RxLR effector protein PexRD21 (97 aa).

Residues 1–21 (MRLSYILVVVIAVTLQACVCA) form the signal peptide. The RxLR-dEER signature appears at 48-66 (RLLRGVKKRTAEREVQEER).

It belongs to the RxLR effector family.

Its subcellular location is the secreted. The protein localises to the host cell membrane. Effector that is involved in host plant infection. Contributes to virulence during the early infection stage, by inhibiting plant defense responses induced by both PAMP-triggered immunity (PTI) and effector-triggered immunity (ETI). This chain is RxLR effector protein PexRD21, found in Phytophthora infestans (strain T30-4) (Potato late blight agent).